A 318-amino-acid polypeptide reads, in one-letter code: MWKRLLIVSAVSAAMSSMALAAPLTVGFSQVGSESGWRAAETNVAKSEAEKRGITLKIADGQQKQENQIKAVRSFVAQGVDAIFIAPVVATGWEPVLKEAKDAEIPVFLLDRSIDVKDKSLYMTTVTADNILEGKLIGDWLVKEVNGKPCNVVELQGTVGASVAIDRKKGFAEAIKNAPNIKIIRSQSGDFTRSKGKEVMESFIKAENNGKNICMVYAHNDDMVIGAIQAIKEAGLKPGKDILTGSIDGVPDIYKAMMDGEANASVELTPNMAGPAFDALEKYKKDGTMPEKLTLTKSTLYLPDTAKEELEKKKNMGY.

Residues M1 to A21 form the signal peptide. Beta-D-galactofuranose contacts are provided by residues E34–R38, D111–R112, R167, N220, and D248. The cysteines at positions 150 and 214 are disulfide-linked.

The protein belongs to the bacterial solute-binding protein 2 family. The complex is composed of two ATP-binding proteins (YtfR), two transmembrane proteins (YtfT and YjfF) and a solute-binding protein (YtfQ).

It localises to the periplasm. Its function is as follows. Part of the ABC transporter complex YtfQRT-YjfF involved in galactofuranose transport. Binds to both alpha- and beta-galactofuranose. This Escherichia coli (strain K12) protein is Galactofuranose-binding protein YtfQ (ytfQ).